Here is a 200-residue protein sequence, read N- to C-terminus: Small ribosomal subunit protein uS2 (200 aa).

This sequence belongs to the universal ribosomal protein uS2 family.

In Picrophilus torridus (strain ATCC 700027 / DSM 9790 / JCM 10055 / NBRC 100828 / KAW 2/3), this protein is Small ribosomal subunit protein uS2.